Here is a 106-residue protein sequence, read N- to C-terminus: Heat shock protein HspQ (106 aa).

The interval 80 to 106 (DEHLDNDSMDELSQSIRNQLQAPRLRN) is disordered. The span at 90-100 (ELSQSIRNQLQ) shows a compositional bias: polar residues.

It belongs to the HspQ family.

It localises to the cytoplasm. Its function is as follows. Involved in the degradation of certain denaturated proteins, including DnaA, during heat shock stress. The polypeptide is Heat shock protein HspQ (Proteus mirabilis (strain HI4320)).